The primary structure comprises 98 residues: Integration host factor subunit alpha (98 aa).

Positions 49–70 (FGNFDLRDKNQRPGRNPKTGED) are disordered.

Belongs to the bacterial histone-like protein family. In terms of assembly, heterodimer of an alpha and a beta chain.

In terms of biological role, this protein is one of the two subunits of integration host factor, a specific DNA-binding protein that functions in genetic recombination as well as in transcriptional and translational control. The sequence is that of Integration host factor subunit alpha from Yersinia pestis.